A 480-amino-acid chain; its full sequence is MVRRRAQEVSAVTDQPACPPAMDLAPASGSRGLHVITWGCQMNVYDSARMTDVLRPLGYHPVDTPDTADMVILNTCHIRDRAAEKVFSELGRLRLVKEARATEGQQTVLAVAGCVAQAEGKEILARAPFVDIVLGPQTYHRLPEMVARAARAAGAVIDTDFPAEQKFDFLPDAQAPQSPGGITSFLTIQEGCDKFCSFCVVPYTRGAEASRPVASVLREARRMVECGAREITLLGQNVNAYHGEGPDGRVWGLARLAEALAAIPGLARIRYTTSHPRDMDADLIAAHRDLPALMPFLHLPVQSGSDRILDAMNRGHTAADYRDLVLRLRDARPDIALSSDFIVGHPGETDADFEATLQLIRDVGFAQAFSFKYSPRPGTPAAGAPLQVAEDVKDARLQALQALLRTQQDAFNDGTVGHVVPVLFTGHGRKAGQLSGRSPYLQPVHVEGPDSLIGQIANVEIRERYTNSLSGTLVQERAFA.

The 121-residue stretch at 31–151 (RGLHVITWGC…LPEMVARAAR (121 aa)) folds into the MTTase N-terminal domain. Residues Cys-40, Cys-76, Cys-114, Cys-192, Cys-196, and Cys-199 each coordinate [4Fe-4S] cluster. Residues 178–410 (SPGGITSFLT…QALLRTQQDA (233 aa)) form the Radical SAM core domain. Residues 413–475 (DGTVGHVVPV…TNSLSGTLVQ (63 aa)) enclose the TRAM domain.

The protein belongs to the methylthiotransferase family. MiaB subfamily. As to quaternary structure, monomer. Requires [4Fe-4S] cluster as cofactor.

It is found in the cytoplasm. The enzyme catalyses N(6)-dimethylallyladenosine(37) in tRNA + (sulfur carrier)-SH + AH2 + 2 S-adenosyl-L-methionine = 2-methylsulfanyl-N(6)-dimethylallyladenosine(37) in tRNA + (sulfur carrier)-H + 5'-deoxyadenosine + L-methionine + A + S-adenosyl-L-homocysteine + 2 H(+). Its function is as follows. Catalyzes the methylthiolation of N6-(dimethylallyl)adenosine (i(6)A), leading to the formation of 2-methylthio-N6-(dimethylallyl)adenosine (ms(2)i(6)A) at position 37 in tRNAs that read codons beginning with uridine. The sequence is that of tRNA-2-methylthio-N(6)-dimethylallyladenosine synthase from Gluconacetobacter diazotrophicus (strain ATCC 49037 / DSM 5601 / CCUG 37298 / CIP 103539 / LMG 7603 / PAl5).